Consider the following 504-residue polypeptide: Protoporphyrinogen oxidase, mitochondrial (504 aa).

Residues 20 to 25 (GAGVSG), 43 to 44 (EA), K51, and 65 to 68 (GANT) each bind FAD. Positions 213–232 (SPKNEKKQGPPKTSANKKRQ) are disordered. FAD is bound by residues V264 and 473 to 475 (LSV).

This sequence belongs to the protoporphyrinogen/coproporphyrinogen oxidase family. Protoporphyrinogen oxidase subfamily. FAD is required as a cofactor.

It localises to the mitochondrion. It catalyses the reaction protoporphyrinogen IX + 3 O2 = protoporphyrin IX + 3 H2O2. It functions in the pathway porphyrin-containing compound metabolism; protoporphyrin-IX biosynthesis; protoporphyrin-IX from protoporphyrinogen-IX: step 1/1. With respect to regulation, inhibited by the herbicide acifluorfen. Catalyzes the 6-electron oxidation of protoporphyrinogen-IX to form protoporphyrin-IX. Functionally, provides precursor for the mitochondrial and plastidic heme synthesis and the predominant chlorophyll synthesis in plastids. This chain is Protoporphyrinogen oxidase, mitochondrial (PPXII), found in Nicotiana tabacum (Common tobacco).